Reading from the N-terminus, the 124-residue chain is Small ribosomal subunit protein uS12 (124 aa).

The interval 1–25 (MPTINQLIRKPRKSQKEKTASPALQ) is disordered. The residue at position 89 (Asp89) is a 3-methylthioaspartic acid.

The protein belongs to the universal ribosomal protein uS12 family. As to quaternary structure, part of the 30S ribosomal subunit. Contacts proteins S8 and S17. May interact with IF1 in the 30S initiation complex.

Functionally, with S4 and S5 plays an important role in translational accuracy. In terms of biological role, interacts with and stabilizes bases of the 16S rRNA that are involved in tRNA selection in the A site and with the mRNA backbone. Located at the interface of the 30S and 50S subunits, it traverses the body of the 30S subunit contacting proteins on the other side and probably holding the rRNA structure together. The combined cluster of proteins S8, S12 and S17 appears to hold together the shoulder and platform of the 30S subunit. In Borrelia duttonii (strain Ly), this protein is Small ribosomal subunit protein uS12.